Here is a 369-residue protein sequence, read N- to C-terminus: Type 2 DNA topoisomerase 6 subunit A (369 aa).

Residues 10–146 (KPREIAKQKI…LGFIPEEDGS (137 aa)) enclose the Topo IIA-type catalytic domain. Tyrosine 103 serves as the catalytic O-(5'-phospho-DNA)-tyrosine intermediate. Positions 197 and 249 each coordinate Mg(2+).

It belongs to the TOP6A family. Homodimer. Heterotetramer of two Top6A and two Top6B chains. It depends on Mg(2+) as a cofactor.

The enzyme catalyses ATP-dependent breakage, passage and rejoining of double-stranded DNA.. Relaxes both positive and negative superturns and exhibits a strong decatenase activity. The polypeptide is Type 2 DNA topoisomerase 6 subunit A (Methanocaldococcus jannaschii (strain ATCC 43067 / DSM 2661 / JAL-1 / JCM 10045 / NBRC 100440) (Methanococcus jannaschii)).